The primary structure comprises 143 residues: Phospholipase A2 isozymes PA3A/PA3B/PA5 (143 aa).

The Ca(2+) site is built by tryptophan 10, glycine 12, and glycine 14. Intrachain disulfides connect cysteine 11/cysteine 33, cysteine 32/cysteine 72, and cysteine 39/cysteine 65. Histidine 36 is a catalytic residue. Aspartate 37 serves as a coordination point for Ca(2+).

Belongs to the phospholipase A2 family. Group III subfamily. Ca(2+) is required as a cofactor. As to expression, expressed by the venom gland.

The protein resides in the secreted. It carries out the reaction a 1,2-diacyl-sn-glycero-3-phosphocholine + H2O = a 1-acyl-sn-glycero-3-phosphocholine + a fatty acid + H(+). Its function is as follows. PLA2 catalyzes the calcium-dependent hydrolysis of the 2-acyl groups in 3-sn-phosphoglycerides. This chain is Phospholipase A2 isozymes PA3A/PA3B/PA5, found in Heloderma suspectum (Gila monster).